Here is a 510-residue protein sequence, read N- to C-terminus: MAAAGAMPGGLLLTFLLLAVVASGAYNSAGEPPVSRRSFPKGFIFGTASSSYQYEGGAAEGGRGPSIWDTFTHQHPEKIADRSNGDVASDSYHLYKEDVRLMKDMGMDAYRFSISWTRILPNGSLRGGVNKEGIKYYNNLINELLSKGVQPFITLFHWDSPQALEDKYNGFLSPNIINDFKDYAEICFKEFGDRVKNWITFNEPWTFCSNGYATGLFAPGRCSPWEKGNCSVGDSGREPYTACHHQLLAHAETVRLYKAKYQALQKGKIGITLVSHWFVPFSRSKSNNDAAKRAIDFMFGWFMDPLIRGDYPLSMRGLVGNRLPQFTKEQSKLVKGAFDFIGLNYYTANYADNLPPSNGLNNSYTTDSRANLTGVRNGIPIGPQAASPWLYVYPQGFRDLLLYVKENYGNPTVYITENGVDEFNNKTLPLQEALKDDARIEYYHKHLLSLLSAIRDGANVKGYFAWSLLDNFEWSNGYTVRFGINFVDYNDGRKRYPKNSAHWFKKFLLK.

Residues 1–24 (MAAAGAMPGGLLLTFLLLAVVASG) form the signal peptide. Residue Q53 participates in a beta-D-glucoside binding. Residue N122 is glycosylated (N-linked (GlcNAc...) asparagine). Residues H157 and 202-203 (NE) each bind a beta-D-glucoside. E203 serves as the catalytic Proton donor. 2 disulfide bridges follow: C208–C243 and C222–C230. A glycan (N-linked (GlcNAc...) asparagine) is linked at N229. Position 346 (Y346) interacts with a beta-D-glucoside. N-linked (GlcNAc...) asparagine glycans are attached at residues N361 and N371. A beta-D-glucoside is bound at residue E417. The active-site Nucleophile is the E417. A glycan (N-linked (GlcNAc...) asparagine) is linked at N425. A beta-D-glucoside contacts are provided by residues W466, 473 to 474 (EW), and F482.

It belongs to the glycosyl hydrolase 1 family.

It localises to the secreted. It carries out the reaction Hydrolysis of terminal, non-reducing beta-D-glucosyl residues with release of beta-D-glucose.. Functionally, hydrolyzes p-nitrophenyl beta-D-glucoside, p-nitrophenyl beta-D-galactoside, p-nitrophenyl beta-D-xyloside, p-nitrophenyl beta-D-fucoside, p-nitrophenyl beta-L-arabinoside, cello-oligosaccharides and laminaribiose. The protein is Beta-glucosidase 12 of Oryza sativa subsp. indica (Rice).